Consider the following 377-residue polypeptide: Copper-containing nitrite reductase (377 aa).

The tat-type signal signal peptide spans 1 to 35 (MTNTLQMTRRTMLTGAAVAGALTPILTSGGGNASP). Plastocyanin-like domains lie at 99 to 194 (MTFD…IMVL) and 259 to 360 (GAVG…FKVT). Residues histidine 132, histidine 137, histidine 172, cysteine 173, histidine 182, methionine 187, and histidine 343 each coordinate Cu cation.

This sequence belongs to the multicopper oxidase family. As to quaternary structure, homotrimer. Cu(2+) serves as cofactor. It depends on Cu(+) as a cofactor. The cofactor is FAD. In terms of processing, predicted to be exported by the Tat system. The position of the signal peptide cleavage has not been experimentally proven.

It localises to the periplasm. It catalyses the reaction nitric oxide + Fe(III)-[cytochrome c] + H2O = Fe(II)-[cytochrome c] + nitrite + 2 H(+). Its pathway is nitrogen metabolism; nitrate reduction (denitrification); dinitrogen from nitrate: step 2/4. In Rhizobium sullae (Rhizobium hedysari), this protein is Copper-containing nitrite reductase (nirK).